The primary structure comprises 379 residues: tRNA-specific 2-thiouridylase MnmA (379 aa).

ATP-binding positions include 6 to 13 (AMSGGVDS) and leucine 32. The Nucleophile role is filled by cysteine 101. A disulfide bond links cysteine 101 and cysteine 199. Residue glycine 125 participates in ATP binding. The interval 148 to 150 (KDQ) is interaction with tRNA. The active-site Cysteine persulfide intermediate is cysteine 199.

This sequence belongs to the MnmA/TRMU family.

Its subcellular location is the cytoplasm. It carries out the reaction S-sulfanyl-L-cysteinyl-[protein] + uridine(34) in tRNA + AH2 + ATP = 2-thiouridine(34) in tRNA + L-cysteinyl-[protein] + A + AMP + diphosphate + H(+). In terms of biological role, catalyzes the 2-thiolation of uridine at the wobble position (U34) of tRNA, leading to the formation of s(2)U34. The protein is tRNA-specific 2-thiouridylase MnmA of Arthrobacter sp. (strain FB24).